The primary structure comprises 448 residues: Nuclear distribution protein PAC1 (448 aa).

A LisH domain is found at 9 to 41; sequence QAEELHKSIIAYLAANNFQDSVTAMRTELNLGE. The segment at 74 to 95 is disordered; it reads SATPTSLSNRKQDPASWLPAGP. WD repeat units follow at residues 102–143, 145–185, 189–236, 239–278, 283–343, 345–384, and 389–444; these read SHRT…RTVK, HTKA…KNIR, GHDH…CLKT, GHSD…PETK, GHEH…IKTL, GHDN…KCVK, and MHEH…TSLR.

The protein belongs to the WD repeat LIS1/nudF family. Self-associates. Interacts with NDL1 and dynein.

It localises to the cytoplasm. The protein resides in the cytoskeleton. It is found in the spindle pole. Positively regulates the activity of the minus-end directed microtubule motor protein dynein. May enhance dynein-mediated microtubule sliding by targeting dynein to the microtubule plus end. Required for nuclear migration during vegetative growth as well as development. Required for retrograde early endosome (EE) transport from the hyphal tip. Required for localization of dynein to the mitotic spindle poles. Recruits additional proteins to the dynein complex at SPBs. The chain is Nuclear distribution protein PAC1 from Fusarium vanettenii (strain ATCC MYA-4622 / CBS 123669 / FGSC 9596 / NRRL 45880 / 77-13-4) (Fusarium solani subsp. pisi).